The primary structure comprises 451 residues: Bifunctional protein GlmU (451 aa).

The pyrophosphorylase stretch occupies residues 1 to 231; it reads MDSPLAIIVL…ADEVAGINSR (231 aa). UDP-N-acetyl-alpha-D-glucosamine contacts are provided by residues 10–13, Lys24, Gln74, 79–80, 102–104, Gly142, Glu156, Asn171, and Asn229; these read LAAG, GT, and YGD. Asp104 is a binding site for Mg(2+). Position 229 (Asn229) interacts with Mg(2+). The linker stretch occupies residues 232–252; that stretch reads GELAEAEGRWQQRRRAAAMAD. Residues 253–451 are N-acetyltransferase; the sequence is GASLIAPETV…MKKKKAEKKS (199 aa). Residues Arg318 and Lys336 each contribute to the UDP-N-acetyl-alpha-D-glucosamine site. His348 serves as the catalytic Proton acceptor. UDP-N-acetyl-alpha-D-glucosamine-binding residues include Tyr351 and Asn362. Acetyl-CoA is bound by residues Ala365, 371–372, Ser390, Ala408, and Arg425; that span reads NY.

This sequence in the N-terminal section; belongs to the N-acetylglucosamine-1-phosphate uridyltransferase family. The protein in the C-terminal section; belongs to the transferase hexapeptide repeat family. In terms of assembly, homotrimer. It depends on Mg(2+) as a cofactor.

The protein localises to the cytoplasm. The enzyme catalyses alpha-D-glucosamine 1-phosphate + acetyl-CoA = N-acetyl-alpha-D-glucosamine 1-phosphate + CoA + H(+). It catalyses the reaction N-acetyl-alpha-D-glucosamine 1-phosphate + UTP + H(+) = UDP-N-acetyl-alpha-D-glucosamine + diphosphate. Its pathway is nucleotide-sugar biosynthesis; UDP-N-acetyl-alpha-D-glucosamine biosynthesis; N-acetyl-alpha-D-glucosamine 1-phosphate from alpha-D-glucosamine 6-phosphate (route II): step 2/2. The protein operates within nucleotide-sugar biosynthesis; UDP-N-acetyl-alpha-D-glucosamine biosynthesis; UDP-N-acetyl-alpha-D-glucosamine from N-acetyl-alpha-D-glucosamine 1-phosphate: step 1/1. It participates in bacterial outer membrane biogenesis; LPS lipid A biosynthesis. In terms of biological role, catalyzes the last two sequential reactions in the de novo biosynthetic pathway for UDP-N-acetylglucosamine (UDP-GlcNAc). The C-terminal domain catalyzes the transfer of acetyl group from acetyl coenzyme A to glucosamine-1-phosphate (GlcN-1-P) to produce N-acetylglucosamine-1-phosphate (GlcNAc-1-P), which is converted into UDP-GlcNAc by the transfer of uridine 5-monophosphate (from uridine 5-triphosphate), a reaction catalyzed by the N-terminal domain. The chain is Bifunctional protein GlmU from Novosphingobium aromaticivorans (strain ATCC 700278 / DSM 12444 / CCUG 56034 / CIP 105152 / NBRC 16084 / F199).